The primary structure comprises 777 residues: Zygote defective protein 12 (777 aa).

Basic and acidic residues-rich tracts occupy residues 1–10 and 18–36; these read MLDLTNKESE and KYED…PFKE. The segment at 1 to 36 is disordered; the sequence is MLDLTNKESESSDNGNSKYEDSIDGREVGTSKPFKE. Residues 1 to 234 form an interaction with dli-1 region; sequence MLDLTNKESE…ESSGKLNGNG (234 aa). Residues 44–169 form the Calponin-homology (CH) domain; the sequence is QADLADMAVW…VTLAHIGKNA (126 aa). Disordered stretches follow at residues 217–242 and 273–292; these read QSEL…RSNA and SFET…DISI. The segment covering 218-235 has biased composition (low complexity); that stretch reads SELNSLSESSGKLNGNGS. 2 coiled-coil regions span residues 236–399 and 425–688; these read SERR…HHVK and NTEL…QENR. The segment covering 273 to 288 has biased composition (polar residues); it reads SFETAQHDMSSNSESG. The helical transmembrane segment at 747-767 threads the bilayer; it reads AMASILVLGFLVFIAWMFINI. The tract at residues 749 to 777 is interaction with unc-84; the sequence is ASILVLGFLVFIAWMFININSALNAPPNA.

Belongs to the hook family. In terms of assembly, homodimer. Interacts with the dynein subunit dli-1 via its N-terminus. May interact with microtubules. Interacts with sut-2. Interacts (via C-terminus) with unc-84 (via C-terminus); the interaction is direct. In terms of tissue distribution, expressed in the syncytial gonad, oocytes, and in all cells during the development of the early embryo.

The protein localises to the nucleus membrane. It is found in the cytoplasm. It localises to the cytoskeleton. Its subcellular location is the microtubule organizing center. The protein resides in the centrosome. Cytoskeletal linker protein, which is essential for attachment of the centrosome to the nucleus. Required for dynein localization to the nuclear envelope. Forms a LINC (LInker of Nucleoskeleton and Cytoskeleton) complex together with unc-84, that may be involved in DNA damage repair. This chain is Zygote defective protein 12, found in Caenorhabditis elegans.